We begin with the raw amino-acid sequence, 365 residues long: Probable protein kinase At2g41970 (365 aa).

The interval 1 to 50 (MFCCGGADEEPAGPPANQYAAPPNKAGNPNFGGGNRGEPRNPNAPRSGAP) is disordered. The 282-residue stretch at 73–354 (FGNKALIGEG…IVVKALQPLL (282 aa)) folds into the Protein kinase domain. ATP contacts are provided by residues 79–87 (IGEGSYGRV) and lysine 100. Phosphotyrosine is present on tyrosine 146. Residue aspartate 204 is the Proton acceptor of the active site. Phosphoserine occurs at positions 208 and 238. 2 positions are modified to phosphothreonine: threonine 239 and threonine 244. Position 252 is a phosphotyrosine (tyrosine 252).

It belongs to the protein kinase superfamily. Tyr protein kinase family.

This chain is Probable protein kinase At2g41970, found in Arabidopsis thaliana (Mouse-ear cress).